Here is a 910-residue protein sequence, read N- to C-terminus: MKKMSRNVLLQMEEEEDDDDGDIVLENLGQTIVPDLGSLESQHDFRTPEFEEFNGKPDSLFFNDGQRRIDFVLVYEDESRKETNKKGTNEKQRRKRQAYESNLICHGLQLEATRSVLDDKLVFVKVHAPWEVLCTYAEIMHIKLPLKPNDLKNRSSAFGTLNWFTKVLSVDESIIKPEQEFFTAPFEKNRMNDFYIVDRDAFFNPATRSRIVYFILSRVKYQVINNVSKFGINRLVNSGIYKAAFPLHDCKFRRQSEDPSCPNERYLLYREWAHPRSIYKKQPLDLIRKYYGEKIGIYFAWLGYYTQMLLLAAVVGVACFLYGYLNQDNCTWSKEVCHPDIGGKIIMCPQCDRLCPFWKLNITCESSKKLCIFDSFGTLVFAVFMGVWVTLFLEFWKRRQAELEYEWDTVELQQEEQARPEYEARCTHVVINEITQEEERIPFTAWGKCIRITLCASAVFFWILLIIASVIGIIVYRLSVFIVFSAKLPKNINGTDPIQKYLTPQTATSITASIISFIIIMILNTIYEKVAIMITNFELPRTQTDYENSLTMKMFLFQFVNYYSSCFYIAFFKGKFVGYPGDPVYWLGKYRNEECDPGGCLLELTTQLTIIMGGKAIWNNIQEVLLPWIMNLIGRFHRVSGSEKITPRWEQDYHLQPMGKLGLFYEYLEMIIQFGFVTLFVASFPLAPLLALVNNILEIRVDAWKLTTQFRRLVPEKAQDIGAWQPIMQGIAILAVVTNAMIIAFTSDMIPRLVYYWSFSVPPYGDHTSYTMEGYINNTLSIFKVADFKNKSKGNPYSDLGNHTTCRYRDFRYPPGHPQEYKHNIYYWHVIAAKLAFIIVMEHVIYSVKFFISYAIPDVSKRTKSKIQREKYLTQKLLHENHLKDMTKNMGVIAERMIEAVDNNLRPKSE.

Residues 1–300 are Cytoplasmic-facing; that stretch reads MKKMSRNVLL…YGEKIGIYFA (300 aa). The chain crosses the membrane as a helical span at residues 301–321; the sequence is WLGYYTQMLLLAAVVGVACFL. Residues 322-375 are Extracellular-facing; the sequence is YGYLNQDNCTWSKEVCHPDIGGKIIMCPQCDRLCPFWKLNITCESSKKLCIFDS. Asn-329 carries an N-linked (GlcNAc...) asparagine glycan. Cystine bridges form between Cys-330–Cys-371, Cys-337–Cys-364, Cys-348–Cys-806, Cys-351–Cys-355, and Cys-595–Cys-600. Asn-361 carries N-linked (GlcNAc...) asparagine glycosylation. A helical membrane pass occupies residues 376–396; that stretch reads FGTLVFAVFMGVWVTLFLEFW. The Cytoplasmic portion of the chain corresponds to 397–455; it reads KRRQAELEYEWDTVELQQEEQARPEYEARCTHVVINEITQEEERIPFTAWGKCIRITLC. Residues 456–476 traverse the membrane as a helical segment; sequence ASAVFFWILLIIASVIGIIVY. The Extracellular segment spans residues 477 to 509; it reads RLSVFIVFSAKLPKNINGTDPIQKYLTPQTATS. Asn-493 carries N-linked (GlcNAc...) asparagine glycosylation. The helical transmembrane segment at 510–530 threads the bilayer; it reads ITASIISFIIIMILNTIYEKV. The Cytoplasmic portion of the chain corresponds to 531 to 551; it reads AIMITNFELPRTQTDYENSLT. The helical transmembrane segment at 552–572 threads the bilayer; the sequence is MKMFLFQFVNYYSSCFYIAFF. The Extracellular portion of the chain corresponds to 573-601; that stretch reads KGKFVGYPGDPVYWLGKYRNEECDPGGCL. Residues 602–621 traverse the membrane as a helical segment; the sequence is LELTTQLTIIMGGKAIWNNI. Residues 622–663 are Cytoplasmic-facing; the sequence is QEVLLPWIMNLIGRFHRVSGSEKITPRWEQDYHLQPMGKLGL. Ca(2+) is bound by residues Glu-623, Glu-666, and Glu-669. Helical transmembrane passes span 664–684 and 685–705; these read FYEY…VASF and PLAP…DAWK. Residues 706-722 lie on the Cytoplasmic side of the membrane; the sequence is LTTQFRRLVPEKAQDIG. A helical membrane pass occupies residues 723 to 743; it reads AWQPIMQGIAILAVVTNAMII. Residues 744 to 836 are Extracellular-facing; sequence AFTSDMIPRL…YWHVIAAKLA (93 aa). N-linked (GlcNAc...) asparagine glycans are attached at residues Asn-777, Asn-790, and Asn-802. A helical transmembrane segment spans residues 837 to 857; that stretch reads FIIVMEHVIYSVKFFISYAIP. Residues 858-910 are Cytoplasmic-facing; sequence DVSKRTKSKIQREKYLTQKLLHENHLKDMTKNMGVIAERMIEAVDNNLRPKSE.

It belongs to the anoctamin family. In terms of assembly, homodimer. In terms of tissue distribution, expressed in embryonic stem cell, fetal liver, retina, chronic myologenous leukemia and intestinal cancer.

Its subcellular location is the cell membrane. It carries out the reaction a 1,2-diacyl-sn-glycero-3-phospho-L-serine(in) = a 1,2-diacyl-sn-glycero-3-phospho-L-serine(out). The enzyme catalyses a beta-D-galactosyl-(1&lt;-&gt;1')-N-acylsphing-4-enine(out) = a beta-D-galactosyl-(1&lt;-&gt;1')-N-acylsphing-4-enine(in). The catalysed reaction is a 1,2-diacyl-sn-glycero-3-phosphocholine(in) = a 1,2-diacyl-sn-glycero-3-phosphocholine(out). Its activity is regulated as follows. Exhibits synergistic gating by Ca(2+) and voltage. Inhibited by some non-specific cation channel blockers such as: ruthenium red, 2-aminoethyl diphenylborinate (2APB), gadolinium and cadmium ions. With respect to regulation, (Microbial infection) Activated by SARS coronavirus-2/SARS-CoV-2 spike protein. Its function is as follows. Small-conductance calcium-activated nonselective cation (SCAN) channel which acts as a regulator of phospholipid scrambling in platelets and osteoblasts. Phospholipid scrambling results in surface exposure of phosphatidylserine which in platelets is essential to trigger the clotting system whereas in osteoblasts is essential for the deposition of hydroxyapatite during bone mineralization. Has calcium-dependent phospholipid scramblase activity; scrambles phosphatidylserine, phosphatidylcholine and galactosylceramide. Can generate outwardly rectifying chloride channel currents in airway epithelial cells and Jurkat T lymphocytes. In terms of biological role, (Microbial infection) Upon SARS coronavirus-2/SARS-CoV-2 infection, is activated by spike protein which increases the amplitude of spontaneous Ca(2+) signals and is required for spike-mediated syncytia. This chain is Anoctamin-6, found in Homo sapiens (Human).